Reading from the N-terminus, the 254-residue chain is uncharacterized protein (254 aa).

This is an uncharacterized protein from Caenorhabditis elegans.